The following is a 250-amino-acid chain: MFEIIPILAFEDNYIWLLHQHGHALVVDPGDAHPVLEILDARGLQLRAILVTHHHQDHTGGVEELIQATSAQVFAPAKEQFSFPHHPVTAGDRLDIPGIALSLSVLDVPGHTVGHVAYYGDGMLFSGDTLFGAGCGRLFEGTPGQMYSSLQQLAQLPVNTRVYCGHEYTERNLAFALSLEPHHEALLSRREATAALRAQGLPSLPSSMALELATNPFLRCHEPGIIAASKSAATDPVSVFAAIREMRNHF.

Zn(2+)-binding residues include His53, His55, Asp57, His58, His111, Asp128, and His166.

The protein belongs to the metallo-beta-lactamase superfamily. Glyoxalase II family. Monomer. It depends on Zn(2+) as a cofactor.

It catalyses the reaction an S-(2-hydroxyacyl)glutathione + H2O = a 2-hydroxy carboxylate + glutathione + H(+). The protein operates within secondary metabolite metabolism; methylglyoxal degradation; (R)-lactate from methylglyoxal: step 2/2. Functionally, thiolesterase that catalyzes the hydrolysis of S-D-lactoyl-glutathione to form glutathione and D-lactic acid. This chain is Hydroxyacylglutathione hydrolase, found in Methylobacillus flagellatus (strain ATCC 51484 / DSM 6875 / VKM B-1610 / KT).